Here is a 178-residue protein sequence, read N- to C-terminus: 2-C-methyl-D-erythritol 2,4-cyclodiphosphate synthase (178 aa).

Positions 24, 26, and 61 each coordinate a divalent metal cation. 24–26 (DSH) serves as a coordination point for 4-CDP-2-C-methyl-D-erythritol 2-phosphate. 150–153 (TSGE) provides a ligand contact to 4-CDP-2-C-methyl-D-erythritol 2-phosphate.

It belongs to the IspF family. In terms of assembly, homotrimer. The cofactor is a divalent metal cation.

The catalysed reaction is 4-CDP-2-C-methyl-D-erythritol 2-phosphate = 2-C-methyl-D-erythritol 2,4-cyclic diphosphate + CMP. Its pathway is isoprenoid biosynthesis; isopentenyl diphosphate biosynthesis via DXP pathway; isopentenyl diphosphate from 1-deoxy-D-xylulose 5-phosphate: step 4/6. Its function is as follows. Involved in the biosynthesis of isopentenyl diphosphate (IPP) and dimethylallyl diphosphate (DMAPP), two major building blocks of isoprenoid compounds. Catalyzes the conversion of 4-diphosphocytidyl-2-C-methyl-D-erythritol 2-phosphate (CDP-ME2P) to 2-C-methyl-D-erythritol 2,4-cyclodiphosphate (ME-CPP) with a corresponding release of cytidine 5-monophosphate (CMP). This chain is 2-C-methyl-D-erythritol 2,4-cyclodiphosphate synthase, found in Chlamydia trachomatis serovar L2b (strain UCH-1/proctitis).